Here is a 550-residue protein sequence, read N- to C-terminus: Dihydroxy-acid dehydratase (550 aa).

D78 serves as a coordination point for Mg(2+). C119 serves as a coordination point for [2Fe-2S] cluster. D120 and K121 together coordinate Mg(2+). At K121 the chain carries N6-carboxylysine. C191 is a binding site for [2Fe-2S] cluster. Residue E440 participates in Mg(2+) binding. Catalysis depends on S466, which acts as the Proton acceptor.

This sequence belongs to the IlvD/Edd family. As to quaternary structure, homodimer. [2Fe-2S] cluster serves as cofactor. Mg(2+) is required as a cofactor.

It catalyses the reaction (2R)-2,3-dihydroxy-3-methylbutanoate = 3-methyl-2-oxobutanoate + H2O. The enzyme catalyses (2R,3R)-2,3-dihydroxy-3-methylpentanoate = (S)-3-methyl-2-oxopentanoate + H2O. Its pathway is amino-acid biosynthesis; L-isoleucine biosynthesis; L-isoleucine from 2-oxobutanoate: step 3/4. It functions in the pathway amino-acid biosynthesis; L-valine biosynthesis; L-valine from pyruvate: step 3/4. In terms of biological role, functions in the biosynthesis of branched-chain amino acids. Catalyzes the dehydration of (2R,3R)-2,3-dihydroxy-3-methylpentanoate (2,3-dihydroxy-3-methylvalerate) into 2-oxo-3-methylpentanoate (2-oxo-3-methylvalerate) and of (2R)-2,3-dihydroxy-3-methylbutanoate (2,3-dihydroxyisovalerate) into 2-oxo-3-methylbutanoate (2-oxoisovalerate), the penultimate precursor to L-isoleucine and L-valine, respectively. The chain is Dihydroxy-acid dehydratase from Methanococcus vannielii (strain ATCC 35089 / DSM 1224 / JCM 13029 / OCM 148 / SB).